Reading from the N-terminus, the 193-residue chain is Putative 3-methyladenine DNA glycosylase (193 aa).

Belongs to the DNA glycosylase MPG family.

This Nitrosospira multiformis (strain ATCC 25196 / NCIMB 11849 / C 71) protein is Putative 3-methyladenine DNA glycosylase.